The following is a 377-amino-acid chain: Putative glutamate--cysteine ligase 2 (377 aa).

It belongs to the glutamate--cysteine ligase type 2 family. YbdK subfamily.

The catalysed reaction is L-cysteine + L-glutamate + ATP = gamma-L-glutamyl-L-cysteine + ADP + phosphate + H(+). Its function is as follows. ATP-dependent carboxylate-amine ligase which exhibits weak glutamate--cysteine ligase activity. The sequence is that of Putative glutamate--cysteine ligase 2 from Chromobacterium violaceum (strain ATCC 12472 / DSM 30191 / JCM 1249 / CCUG 213 / NBRC 12614 / NCIMB 9131 / NCTC 9757 / MK).